The primary structure comprises 426 residues: MGIKTQKNFICLKRTFSMNLRDAISVANPVQLEEEIKHDEVVSFLKSKNLLDKPVILNVEGKKVAKNFVSSRETLGKYLGVDAYSIARELSKIEDREAEIRVEPFSSLAMKKVDVNLQELPVIKYFPRDGGRYITAGIVIAQRNGVYNASIHRMLLLDESRVAARLVPPRHTYLMWREAVEREEELEVAVVIGTHPLFLFASATRVPSGKEFSYAAGLMGRLTLYRKGEMLVPDSEIILFGRITAETAKEGPFVDITGTYDIVRDEPVIVFDEMYVKEDYIYYSITPAGKEHQMLMGVPYEPVIYRFVSNVCKVKNVITTPGSCHYFHCVVQIEKKSEGDGKNAIIAALAANPSMKGVVVVDDDIDILSYEDMEFAIATRFQPDRDLVVVKGARGSSLDPSADKTTSKWGIDATKPLGKEGFDRVV.

The Mn(2+) site is built by N148 and E211. D255 serves as the catalytic Proton acceptor.

This sequence belongs to the UbiD family. Prenylated FMN is required as a cofactor. It depends on Mn(2+) as a cofactor.

The catalysed reaction is (2E)-3-methyl-5-phosphooxypent-2-enoate + H(+) = isopentenyl phosphate + CO2. It functions in the pathway isoprenoid biosynthesis; isopentenyl diphosphate biosynthesis via mevalonate pathway. In terms of biological role, catalyzes the conversion of trans-anhydromevalonate 5-phosphate (tAHMP) into isopentenyl phosphate. Involved in the archaeal mevalonate (MVA) pathway, which provides fundamental precursors for isoprenoid biosynthesis, such as isopentenyl diphosphate (IPP) and dimethylallyl diphosphate (DMAPP). The sequence is that of Anhydromevalonate phosphate decarboxylase from Archaeoglobus fulgidus (strain ATCC 49558 / DSM 4304 / JCM 9628 / NBRC 100126 / VC-16).